A 416-amino-acid chain; its full sequence is uncharacterized protein (416 aa).

Zn(2+)-binding residues include H29, D31, E144, H215, and H236.

The protein belongs to the metallo-dependent hydrolases superfamily. Peptidase M19 family. The cofactor is Zn(2+).

It carries out the reaction an L-aminoacyl-L-amino acid + H2O = 2 an L-alpha-amino acid. This is an uncharacterized protein from Schizosaccharomyces pombe (strain 972 / ATCC 24843) (Fission yeast).